The chain runs to 216 residues: UPF0502 protein Pmen_2627 (216 aa).

Belongs to the UPF0502 family.

The polypeptide is UPF0502 protein Pmen_2627 (Ectopseudomonas mendocina (strain ymp) (Pseudomonas mendocina)).